The sequence spans 759 residues: Protein YdeP (759 aa).

[4Fe-4S] cluster contacts are provided by Cys-49 and Cys-52.

It belongs to the prokaryotic molybdopterin-containing oxidoreductase family. It depends on [4Fe-4S] cluster as a cofactor. Requires Mo-bis(molybdopterin guanine dinucleotide) as cofactor.

In terms of biological role, probably involved in acid resistance. This is Protein YdeP (ydeP) from Shigella flexneri.